Here is a 302-residue protein sequence, read N- to C-terminus: Recombination-associated protein RdgC (302 aa).

Belongs to the RdgC family.

Its subcellular location is the cytoplasm. It localises to the nucleoid. In terms of biological role, may be involved in recombination. This Mannheimia succiniciproducens (strain KCTC 0769BP / MBEL55E) protein is Recombination-associated protein RdgC.